Consider the following 302-residue polypeptide: 1,2-dihydroxynaphthalene dioxygenase (302 aa).

VOC domains lie at E9–G124 and G149–R270. H152 contributes to the Fe cation binding site. Residues H152, D199 to H200, H215, and Y256 contribute to the substrate site. Residue H215 coordinates Fe cation. E266 is a binding site for Fe cation.

Belongs to the extradiol ring-cleavage dioxygenase family. Requires Fe(2+) as cofactor.

It carries out the reaction naphthalene-1,2-diol + O2 = 2-hydroxychromene-2-carboxylate + H(+). It functions in the pathway aromatic compound metabolism; naphthalene degradation. Its activity is regulated as follows. Inhibited by bathophenanthroline sulfonate, o-phenanthroline, 8-hydroxyquinoline, 2,2'-dipyridyl and p-chlormercuribenzoate. Also inhibited by Hg(2+), Cu(2+), Co(2+) and Fe(3+) ions. In terms of biological role, involved in the naphthalene catabolic pathway. Catalyzes the meta-cleavage of 1,2-dihydroxynaphthalene (1,2-DHN) to yield 2-hydroxychromene-2-carboxylic acid. Can also cleave 3-methylcatechol and 4-methylcatechol. This chain is 1,2-dihydroxynaphthalene dioxygenase (nahC), found in Pseudomonas putida (Arthrobacter siderocapsulatus).